The chain runs to 213 residues: Protein HSH49 (213 aa).

2 consecutive RRM domains span residues 9–88 (NTVY…QVTN) and 108–185 (AKLF…YAFK).

Interacts with RDS3.

The protein resides in the nucleus. In terms of biological role, possible SF3b-like factor. This chain is Protein HSH49 (HSH49), found in Saccharomyces cerevisiae (strain ATCC 204508 / S288c) (Baker's yeast).